A 510-amino-acid polypeptide reads, in one-letter code: Probable DNA ligase (510 aa).

Residue glutamate 210 coordinates ATP. Lysine 212 acts as the N6-AMP-lysine intermediate in catalysis. Residues arginine 217, arginine 232, glutamate 261, phenylalanine 296, arginine 367, and lysine 373 each coordinate ATP.

Belongs to the ATP-dependent DNA ligase family. Requires Mg(2+) as cofactor.

It carries out the reaction ATP + (deoxyribonucleotide)n-3'-hydroxyl + 5'-phospho-(deoxyribonucleotide)m = (deoxyribonucleotide)n+m + AMP + diphosphate.. Its function is as follows. DNA ligase that seals nicks in double-stranded DNA during DNA replication, DNA recombination and DNA repair. The sequence is that of Probable DNA ligase from Saccharopolyspora erythraea (strain ATCC 11635 / DSM 40517 / JCM 4748 / NBRC 13426 / NCIMB 8594 / NRRL 2338).